We begin with the raw amino-acid sequence, 368 residues long: N-succinylamino acid racemase (368 aa).

Residues Ser-135 and Lys-161 to Lys-163 each bind 2-succinylbenzoate. The active-site Proton donor is the Lys-163. Asp-189 is a Mg(2+) binding site. Asn-191 serves as a coordination point for 2-succinylbenzoate. Residues Glu-214 and Asp-239 each contribute to the Mg(2+) site. The Proton acceptor role is filled by Lys-263. 2-succinylbenzoate is bound at residue Ile-293.

This sequence belongs to the mandelate racemase/muconate lactonizing enzyme family. MenC type 2 subfamily. In terms of assembly, homooctamer. Requires a divalent metal cation as cofactor.

It catalyses the reaction N-acetyl-D-methionine = N-acetyl-L-methionine. It carries out the reaction (1R,6R)-6-hydroxy-2-succinyl-cyclohexa-2,4-diene-1-carboxylate = 2-succinylbenzoate + H2O. Inhibited by EDTA and sulfhydryl reagents such as p-chloromercuribenzoic acid. Both OSBS and NAAAR activities are inhibited competitively by salicylhydroxamate. Acts as a N-succinylamino acid racemase (NSAR) that catalyzes the racemization of N-succinyl-phenylglycine and N-succinyl-methionine. Can catalyze the racemization of a broad range of N-acylamino acids, including N-acetyl-D/L-methionine, N-propionyl-D/L-methionine, N-butyryl-D/L-methionine and N-chloroacetyl-L-valine. Also converts 2-succinyl-6-hydroxy-2,4-cyclohexadiene-1-carboxylate (SHCHC) to 2-succinylbenzoate (OSB). Catalyzes both N-succinylamino acid racemization and OSB synthesis at equivalent rates. NSAR is probably the biological function of this enzyme. The protein is N-succinylamino acid racemase of Amycolatopsis sp.